The primary structure comprises 448 residues: Keratin, type I cytoskeletal 27 (448 aa).

A head region spans residues 1 to 73; that stretch reads MSVRFSSASR…ANEHGLLSGN (73 aa). Residues 74–109 form a coil 1A region; it reads EKVTMQNLNDRLASYLENVQALEEANADLEQKIKDW. An IF rod domain is found at 74–389; that stretch reads EKVTMQNLND…RLIDGDEGSC (316 aa). The tract at residues 110 to 131 is linker 1; the sequence is YEKFGPGSCRGLDHDYSRYFPI. The interval 132-223 is coil 1B; the sequence is IDDLRTQIIS…KNHEEEMQAL (92 aa). Residues 224 to 246 are linker 12; that stretch reads QCAAGGNVNVEMNAAPGVDLTVL. A coil 2 region spans residues 247–385; it reads LNNMRAEYEA…ETYCRLIDGD (139 aa). The tract at residues 386 to 448 is tail; that stretch reads EGSCVKAKGQ…VNKTEQRIPS (63 aa). The tract at residues 427-448 is disordered; the sequence is SRVHTLEEKSTKVNKTEQRIPS. A compositionally biased stretch (basic and acidic residues) spans 430–448; that stretch reads HTLEEKSTKVNKTEQRIPS.

The protein belongs to the intermediate filament family. As to quaternary structure, heterotetramer of two type I and two type II keratins. Interacts with KRT6A to form filaments. As to expression, expressed in skin. Expressed in the Henle layer and cuticle of the irs in hair follicle bulb. In the hair follicle, expression was observed in all layers of the irs but was stronger in the Henle layer and cuticle than the Huxley layer until the Henle layer differentiated (at protein level).

It is found in the cytoplasm. Essential for the proper assembly of type I and type II keratin protein complexes and formation of keratin intermediate filaments in the inner root sheath (irs). The polypeptide is Keratin, type I cytoskeletal 27 (Mus musculus (Mouse)).